We begin with the raw amino-acid sequence, 322 residues long: NADH-quinone oxidoreductase subunit H (322 aa).

The next 9 helical transmembrane spans lie at 15–35 (FFKV…LSIV), 50–69 (NRVG…KILF), 81–101 (FIFV…IPII), 114–134 (IGIL…LFAG), 149–169 (ACVQ…GVVA), 186–206 (IWNV…GLAV), 237–257 (FFIG…TLFF), 265–285 (IPGC…FILI), and 302–322 (WKFC…LILV).

Belongs to the complex I subunit 1 family. In terms of assembly, NDH-1 is composed of 13 different subunits. Subunits NuoA, H, J, K, L, M, N constitute the membrane sector of the complex.

It localises to the cell membrane. The catalysed reaction is a quinone + NADH + 5 H(+)(in) = a quinol + NAD(+) + 4 H(+)(out). Its function is as follows. NDH-1 shuttles electrons from NADH, via FMN and iron-sulfur (Fe-S) centers, to quinones in the respiratory chain. The immediate electron acceptor for the enzyme in this species is believed to be ubiquinone. Couples the redox reaction to proton translocation (for every two electrons transferred, four hydrogen ions are translocated across the cytoplasmic membrane), and thus conserves the redox energy in a proton gradient. This subunit may bind ubiquinone. The chain is NADH-quinone oxidoreductase subunit H from Buchnera aphidicola subsp. Acyrthosiphon pisum (strain 5A).